The sequence spans 245 residues: 2,3,4,5-tetrahydropyridine-2,6-dicarboxylate N-acetyltransferase (245 aa).

It belongs to the transferase hexapeptide repeat family. DapH subfamily.

It catalyses the reaction (S)-2,3,4,5-tetrahydrodipicolinate + acetyl-CoA + H2O = L-2-acetamido-6-oxoheptanedioate + CoA. It participates in amino-acid biosynthesis; L-lysine biosynthesis via DAP pathway; LL-2,6-diaminopimelate from (S)-tetrahydrodipicolinate (acetylase route): step 1/3. Catalyzes the transfer of an acetyl group from acetyl-CoA to tetrahydrodipicolinate. This chain is 2,3,4,5-tetrahydropyridine-2,6-dicarboxylate N-acetyltransferase, found in Methanopyrus kandleri (strain AV19 / DSM 6324 / JCM 9639 / NBRC 100938).